The following is a 200-amino-acid chain: Molybdenum cofactor guanylyltransferase (200 aa).

GTP is bound by residues 15–17 (LSG), Lys-28, Asp-74, and Asp-104. Asp-104 serves as a coordination point for Mg(2+).

Belongs to the MobA family. Monomer. Mg(2+) is required as a cofactor.

It localises to the cytoplasm. It carries out the reaction Mo-molybdopterin + GTP + H(+) = Mo-molybdopterin guanine dinucleotide + diphosphate. Transfers a GMP moiety from GTP to Mo-molybdopterin (Mo-MPT) cofactor (Moco or molybdenum cofactor) to form Mo-molybdopterin guanine dinucleotide (Mo-MGD) cofactor. This chain is Molybdenum cofactor guanylyltransferase, found in Pseudomonas fluorescens (strain SBW25).